Here is a 165-residue protein sequence, read N- to C-terminus: uncharacterized protein (165 aa).

Positions 1 to 165 constitute a Macro domain; it reads MDIKVVKGSI…EAWEKVLGLR (165 aa).

This is an uncharacterized protein from Aquifex aeolicus (strain VF5).